Reading from the N-terminus, the 191-residue chain is Transcription factor E (191 aa).

The HTH TFE/IIEalpha-type domain occupies 4–87 (RNKELLEIGR…YWHIETKRLP (84 aa)). Residues 170–191 (APPKKEKKGKKSKKRSKKSKKK) form a disordered region. Over residues 174–191 (KEKKGKKSKKRSKKSKKK) the composition is skewed to basic residues.

This sequence belongs to the TFE family. Monomer. Interaction with RNA polymerase subunits RpoF and RpoE is necessary for Tfe stimulatory transcription activity. Able to interact with Tbp and RNA polymerase in the absence of DNA promoter. Interacts both with the preinitiation and elongation complexes.

In terms of biological role, transcription factor that plays a role in the activation of archaeal genes transcribed by RNA polymerase. Facilitates transcription initiation by enhancing TATA-box recognition by TATA-box-binding protein (Tbp), and transcription factor B (Tfb) and RNA polymerase recruitment. Not absolutely required for transcription in vitro, but particularly important in cases where Tbp or Tfb function is not optimal. It dynamically alters the nucleic acid-binding properties of RNA polymerases by stabilizing the initiation complex and destabilizing elongation complexes. Seems to translocate with the RNA polymerase following initiation and acts by binding to the non template strand of the transcription bubble in elongation complexes. The protein is Transcription factor E of Pyrococcus horikoshii (strain ATCC 700860 / DSM 12428 / JCM 9974 / NBRC 100139 / OT-3).